The sequence spans 445 residues: Transcription termination factor MTERF15, mitochondrial (445 aa).

A mitochondrion-targeting transit peptide spans 1-25; the sequence is MASKLKTFINLRDYPITLFNQIRSL.

Belongs to the mTERF family.

Its subcellular location is the mitochondrion. In terms of biological role, transcription termination factor required for mitochondrial NAD2 intron 3 splicing and normal membrane respiratory chain Complex I activity. Essential for normal plant growth and development. Binds to RNA but not to double-stranded DNA. This Arabidopsis thaliana (Mouse-ear cress) protein is Transcription termination factor MTERF15, mitochondrial.